An 861-amino-acid polypeptide reads, in one-letter code: Probable tape measure protein (861 aa).

Positions 20-127 form a coiled coil; it reads RGFAEAAEQM…RLQGSLEEAG (108 aa).

The protein belongs to the P2likevirus tape measure protein family.

Functionally, serves as a base for tail tube protein polymerization and acts as a template for tail length determination. This chain is Probable tape measure protein, found in Vreelandella aquamarina (Bacteriophage phiHAP-1).